Reading from the N-terminus, the 149-residue chain is Large ribosomal subunit protein bL9 (149 aa).

Belongs to the bacterial ribosomal protein bL9 family.

In terms of biological role, binds to the 23S rRNA. The chain is Large ribosomal subunit protein bL9 from Acidothermus cellulolyticus (strain ATCC 43068 / DSM 8971 / 11B).